A 379-amino-acid polypeptide reads, in one-letter code: Forkhead box protein E1 (379 aa).

The span at 1–11 (MTAESQQSPTR) shows a compositional bias: polar residues. Positions 1-65 (MTAESQQSPT…RRRKRPLQKG (65 aa)) are disordered. Positions 54 to 63 (KGRRRKRPLQ) are enriched in basic residues. Positions 66–160 (KPPYSYIALI…DSGSFLRRRK (95 aa)) form a DNA-binding region, fork-head. The interval 239–265 (HSGSEHAQPPNRSISPEVNSTSSSSCN) is disordered. Over residues 251 to 265 (SISPEVNSTSSSSCN) the composition is skewed to low complexity.

As to expression, first expressed at late neural tube and early tailbud stages in the hypophyseal placode. Expression continues in the developing pituitary at late tailbud stages. As development progresses, expressed in the mesoderm of the branchial arches. At stage 38, expressed in the developing thyroid and in the pharyngeal endoderm.

It is found in the nucleus. Its function is as follows. Transcription factor that binds consensus sites on a variety of gene promoters and activate their transcription. This Xenopus laevis (African clawed frog) protein is Forkhead box protein E1.